Reading from the N-terminus, the 416-residue chain is Advanced glycosylation end product-specific receptor (416 aa).

The N-terminal stretch at Met1–Gly22 is a signal peptide. The 93-residue stretch at Asp23–Arg115 folds into the Ig-like V-type domain. At Asp23 to Ala352 the chain is on the extracellular side. Asn25 and Asn80 each carry an N-linked (GlcNAc...) asparagine glycan. 2 cysteine pairs are disulfide-bonded: Cys38–Cys98 and Cys143–Cys207. Ig-like C2-type domains lie at Pro123 to His220 and Pro238 to Ser327. The chain crosses the membrane as a helical span at residues Leu353 to Trp373. Topologically, residues His374 to Pro416 are cytoplasmic. Residues Arg377–Pro416 form a disordered region. The segment covering Asn389 to Ala408 has biased composition (acidic residues).

In terms of assembly, constitutive homodimer; disulfide-linked. Forms homooligomers. Interacts with S100A1 and APP. Interacts with S100B, S100A12 and S100A14. Interacts with TIRAP. Interacts with HMGB1. Interacts with LGP2; this interaction plays an important role in AGER-mediated pro-inflammatory responses and cytokine release. Interacts with double-strand break repair protein MRE11 which is a core component of the MRN complex; the interaction enhances MRE11 endonuclease activity and promotes DNA repair. Interacts with the MCM2-7 complex via interaction with complex member MCM2; the interaction is increased following DNA replication stress and stabilizes the MCM2-7 complex at replication forks. Phosphorylated on its cytoplasmic domain by PKCzeta/PRKCZ upon ligand binding. Phosphorylated by ATM following DNA damage. In terms of processing, targeted by the ubiquitin E3 ligase subunit FBXO10 to mediate its ubiquitination and degradation. As to expression, endothelial cells.

The protein resides in the cell membrane. The protein localises to the cell projection. It localises to the phagocytic cup. It is found in the early endosome. Its subcellular location is the nucleus. Its function is as follows. Cell surface pattern recognition receptor that senses endogenous stress signals with a broad ligand repertoire including advanced glycation end products, S100 proteins, high-mobility group box 1 protein/HMGB1, amyloid beta/APP oligomers, nucleic acids, histones, phospholipids and glycosaminoglycans. Advanced glycosylation end products are nonenzymatically glycosylated proteins which accumulate in vascular tissue in aging and at an accelerated rate in diabetes. These ligands accumulate at inflammatory sites during the pathogenesis of various diseases including diabetes, vascular complications, neurodegenerative disorders and cancers, and RAGE transduces their binding into pro-inflammatory responses. Upon ligand binding, uses TIRAP and MYD88 as adapters to transduce the signal ultimately leading to the induction of inflammatory cytokines IL6, IL8 and TNFalpha through activation of NF-kappa-B. Interaction with S100A12 on endothelium, mononuclear phagocytes, and lymphocytes triggers cellular activation, with generation of key pro-inflammatory mediators. Interaction with S100B after myocardial infarction may play a role in myocyte apoptosis by activating ERK1/2 and p53/TP53 signaling. Contributes to the translocation of amyloid-beta peptide (ABPP) across the cell membrane from the extracellular to the intracellular space in cortical neurons. ABPP-initiated RAGE signaling, especially stimulation of p38 mitogen-activated protein kinase (MAPK), has the capacity to drive a transport system delivering ABPP as a complex with RAGE to the intraneuronal space. Participates in endothelial albumin transcytosis together with HMGB1 through the RAGE/SRC/Caveolin-1 pathway, leading to endothelial hyperpermeability. Mediates the loading of HMGB1 in extracellular vesicles (EVs) that shuttle HMGB1 to hepatocytes by transferrin-mediated endocytosis and subsequently promote hepatocyte pyroptosis by activating the NLRP3 inflammasome. Binds to DNA and promotes extracellular hypomethylated DNA (CpG DNA) uptake by cells via the endosomal route to activate inflammatory responses. Mediates phagocytosis by non-professional phagocytes (NPP) and this is enhanced by binding to ligands including RNA, DNA, HMGB1 and histones. Promotes NPP-mediated phagocytosis of Saccharomyces cerevisiae spores by binding to RNA attached to the spore wall. Also promotes NPP-mediated phagocytosis of apoptotic cells. Following DNA damage, recruited to DNA double-strand break sites where it colocalizes with the MRN repair complex via interaction with double-strand break repair protein MRE11. Enhances the endonuclease activity of MRE11, promoting the end resection of damaged DNA. Promotes DNA damage repair in trophoblasts which enhances trophoblast invasion and contributes to placental development and maintenance. Protects cells from DNA replication stress by localizing to damaged replication forks where it stabilizes the MCM2-7 complex and promotes faithful progression of the replication fork. The protein is Advanced glycosylation end product-specific receptor (AGER) of Bos taurus (Bovine).